The chain runs to 557 residues: Protein NRT1/ PTR FAMILY 5.14 (557 aa).

The next 2 helical transmembrane spans lie at 35-55 (AALF…GIGS) and 78-98 (AWSG…DAFL). At Thr103 the chain carries Phosphothreonine. 10 helical membrane passes run 104-124 (IIIS…SAFL), 133-153 (SSTS…VAIG), 183-203 (FFNW…LVVV), 209-229 (FSWA…LVLF), 320-340 (IPVW…MTFF), 357-377 (IPPA…VPIY), 401-421 (IGTG…VEFK), 443-463 (IWWL…TLVG), 479-499 (IGLA…SLLI), and 526-546 (YFYW…LFIS).

The protein belongs to the major facilitator superfamily. Proton-dependent oligopeptide transporter (POT/PTR) (TC 2.A.17) family. As to expression, expressed in roots.

Its subcellular location is the membrane. The chain is Protein NRT1/ PTR FAMILY 5.14 (NPF5.14) from Arabidopsis thaliana (Mouse-ear cress).